Consider the following 296-residue polypeptide: Probable endonuclease 4 (296 aa).

Residues His-68, His-109, Glu-144, Asp-178, His-181, His-213, Asp-226, His-228, and Glu-258 each contribute to the Zn(2+) site.

The protein belongs to the AP endonuclease 2 family. Requires Zn(2+) as cofactor.

It carries out the reaction Endonucleolytic cleavage to 5'-phosphooligonucleotide end-products.. In terms of biological role, endonuclease IV plays a role in DNA repair. It cleaves phosphodiester bonds at apurinic or apyrimidinic (AP) sites, generating a 3'-hydroxyl group and a 5'-terminal sugar phosphate. The chain is Probable endonuclease 4 from Staphylococcus aureus (strain MRSA252).